Reading from the N-terminus, the 131-residue chain is Small ribosomal subunit protein uS11 (131 aa).

It belongs to the universal ribosomal protein uS11 family. Part of the 30S ribosomal subunit. Interacts with proteins S7 and S18. Binds to IF-3.

In terms of biological role, located on the platform of the 30S subunit, it bridges several disparate RNA helices of the 16S rRNA. Forms part of the Shine-Dalgarno cleft in the 70S ribosome. The protein is Small ribosomal subunit protein uS11 of Deinococcus deserti (strain DSM 17065 / CIP 109153 / LMG 22923 / VCD115).